We begin with the raw amino-acid sequence, 472 residues long: 3-isopropylmalate dehydratase large subunit (472 aa).

Residues C353, C414, and C417 each coordinate [4Fe-4S] cluster.

It belongs to the aconitase/IPM isomerase family. LeuC type 1 subfamily. Heterodimer of LeuC and LeuD. [4Fe-4S] cluster serves as cofactor.

The catalysed reaction is (2R,3S)-3-isopropylmalate = (2S)-2-isopropylmalate. Its pathway is amino-acid biosynthesis; L-leucine biosynthesis; L-leucine from 3-methyl-2-oxobutanoate: step 2/4. Its function is as follows. Catalyzes the isomerization between 2-isopropylmalate and 3-isopropylmalate, via the formation of 2-isopropylmaleate. This Psychrobacter arcticus (strain DSM 17307 / VKM B-2377 / 273-4) protein is 3-isopropylmalate dehydratase large subunit.